Reading from the N-terminus, the 223-residue chain is uncharacterized protein (223 aa).

This is an uncharacterized protein from Dryophytes versicolor (chameleon treefrog).